The chain runs to 508 residues: Metalloprotease TIKI1 (508 aa).

The signal sequence occupies residues 1–23; sequence MVIIWNIFLPAFLLVLAKASLRS. The Extracellular segment spans residues 24–485; it reads SRDSANCKLN…KYIKAAQSVS (462 aa). N-linked (GlcNAc...) asparagine glycans are attached at residues Asn219, Asn228, Asn277, and Asn335. Residues 486–506 form a helical membrane-spanning segment; it reads FSLSIPSAFLLLAWCFQQVAV. Topologically, residues 507–508 are cytoplasmic; the sequence is LQ.

The protein belongs to the TIKI family. Mn(2+) is required as a cofactor. The cofactor is Co(2+). In terms of tissue distribution, zygotically expressed in the Spemann-Mangold organizer, in particular in the head Spemann-Mangold organizer region responsible for anterior patterning.

The protein resides in the cell membrane. Metalloprotease that acts as a negative regulator of the Wnt signaling pathway: expressed in the Spemann-Mangold organizer and is required for anterior-neural patterning in head formation in embryos. Acts by mediating the cleavage of the N-terminal residues of a subset of Wnt proteins. Following cleavage, Wnt proteins become oxidized and form large disulfide-bond oligomers, leading to their inactivation. Able to cleave wnt8. The polypeptide is Metalloprotease TIKI1 (trabd2a) (Xenopus tropicalis (Western clawed frog)).